Consider the following 497-residue polypeptide: Tripartite motif-containing protein 5 (497 aa).

Alanine 2 carries the N-acetylalanine modification. The RING-type zinc-finger motif lies at 15–60 (CPICLELLTEPLSLHCGHSFCQACITANHKKSMLYKEGERSCPVCR). Serine 87 carries the phosphoserine modification. The segment at 92–133 (QKVDHCARHGEKLLLFCQEDSKVICWLCERSQEHRGHHTFLM) adopts a B box-type zinc-finger fold. Zn(2+) contacts are provided by cysteine 97, histidine 100, cysteine 119, and histidine 125. Residues 137 to 225 (AQEYHVKLQT…LTKSETEMVQ (89 aa)) are a coiled coil. The tract at residues 187-200 (FEQLREILDWEESN) is required for interaction with GABARAP and for autophagy. The 215-residue stretch at 283–497 (LKGMLDMFRE…VPMTLCSPSS (215 aa)) folds into the B30.2/SPRY domain.

This sequence belongs to the TRIM/RBCC family. Can form homodimers and homotrimers. In addition to lower-order dimerization, also exhibits a higher-order multimerization and both low- and high-order multimerizations are essential for its restriction activity. Interacts with MAP3K7/TAK1, TAB2 and TAB3. Interacts with HSPA8/HSC70, PSMC2, PSMC4, PSMC5 and PSMD7. Interacts with SQSTM1. Interacts (via B30.2/SPRY domain) with HSPA1A/B. Interacts with TRIM6 and TRIM34. Interacts with BECN1; GABARAP. Interacts with ULK1 (phosphorylated form), GABARAPL1, GABARAPL2, MAP1LC3A and MAP1LC3C. Post-translationally, degraded in a proteasome-independent fashion in the absence of viral infection but in a proteasome-dependent fashion following exposure to restriction sensitive virus. Autoubiquitinated in a RING finger- and UBE2D2-dependent manner. Monoubiquitinated by TRIM21. Deubiquitinated by Yersinia YopJ. Ubiquitination may not lead to proteasomal degradation.

It is found in the cytoplasm. It localises to the nucleus. It carries out the reaction S-ubiquitinyl-[E2 ubiquitin-conjugating enzyme]-L-cysteine + [acceptor protein]-L-lysine = [E2 ubiquitin-conjugating enzyme]-L-cysteine + N(6)-ubiquitinyl-[acceptor protein]-L-lysine.. It functions in the pathway protein modification; protein ubiquitination. Functionally, capsid-specific restriction factor that prevents infection from non-host-adapted retroviruses. Blocks viral replication early in the life cycle, after viral entry but before reverse transcription. In addition to acting as a capsid-specific restriction factor, also acts as a pattern recognition receptor that activates innate immune signaling in response to the retroviral capsid lattice. Binding to the viral capsid triggers its E3 ubiquitin ligase activity, and in concert with the heterodimeric ubiquitin conjugating enzyme complex UBE2V1-UBE2N (also known as UBC13-UEV1A complex) generates 'Lys-63'-linked polyubiquitin chains, which in turn are catalysts in the autophosphorylation of the MAP3K7/TAK1 complex (includes TAK1, TAB2, and TAB3). Activation of the MAP3K7/TAK1 complex by autophosphorylation results in the induction and expression of NF-kappa-B and MAPK-responsive inflammatory genes, thereby leading to an innate immune response in the infected cell. Restricts infection by human immunodeficiency virus type 1 (HIV-1) and simian immunodeficiency virus (SIV-agm). Plays a role in regulating autophagy through activation of autophagy regulator BECN1 by causing its dissociation from its inhibitors BCL2 and TAB2. Also plays a role in autophagy by acting as a selective autophagy receptor which recognizes and targets HIV-1 capsid protein p24 for autophagic destruction. The sequence is that of Tripartite motif-containing protein 5 (TRIM5) from Macaca mulatta (Rhesus macaque).